We begin with the raw amino-acid sequence, 175 residues long: Peptide deformylase (175 aa).

Residues C99 and H141 each coordinate Fe cation. E142 is a catalytic residue. H145 is a binding site for Fe cation.

This sequence belongs to the polypeptide deformylase family. Fe(2+) is required as a cofactor.

It catalyses the reaction N-terminal N-formyl-L-methionyl-[peptide] + H2O = N-terminal L-methionyl-[peptide] + formate. Removes the formyl group from the N-terminal Met of newly synthesized proteins. Requires at least a dipeptide for an efficient rate of reaction. N-terminal L-methionine is a prerequisite for activity but the enzyme has broad specificity at other positions. The sequence is that of Peptide deformylase from Rickettsia akari (strain Hartford).